Consider the following 219-residue polypeptide: Epididymal secretory glutathione peroxidase (219 aa).

An N-terminal signal peptide occupies residues 1-21 (MTVQLGAFYLFPLFMAGFVQT). Cysteine 71 is an active-site residue.

The protein belongs to the glutathione peroxidase family. Homotetramer. In terms of tissue distribution, proximal caput epididymis.

The protein resides in the secreted. The enzyme catalyses 2 glutathione + H2O2 = glutathione disulfide + 2 H2O. Its function is as follows. May constitute a glutathione peroxidase-like protective system against peroxide damage in sperm membrane lipids. Since the purified porcine enzyme has very little activity towards hydrogen peroxide or organic hydroperoxides the protective effect is not likely to be exerted by its enzymatic activity. Instead, may protect sperm from premature acrosome reaction in the epididymis by binding to lipid peroxides, which might otherwise interact with phospholipase A2 and induce the acrosome reaction. The polypeptide is Epididymal secretory glutathione peroxidase (GPX5) (Sus scrofa (Pig)).